A 526-amino-acid polypeptide reads, in one-letter code: Plant intracellular Ras-group-related LRR protein 5 (526 aa).

LRR repeat units lie at residues 229–252 (LSSL…IGGL), 253–275 (ISLT…IGDL), 276–297 (LNLV…SFNR), 298–321 (LIHL…IGSL), 323–344 (SLKK…ISGC), 346–367 (SMEE…VGKL), 368–390 (STLE…MSSM), 391–414 (ANLK…CYAK), 416–437 (LVKL…LIGN), 438–463 (LEKL…TLSN), and 465–484 (RVLQ…ITEK). The GVYW; degenerate signature appears at 485-492 (GAQAVVQY).

This sequence belongs to the SHOC2 family. In terms of tissue distribution, widely expressed but preferentially in roots.

Leucine-rich repeat protein that likely mediates protein interactions, possibly in the context of signal transduction. This chain is Plant intracellular Ras-group-related LRR protein 5 (PIRL5), found in Arabidopsis thaliana (Mouse-ear cress).